An 85-amino-acid chain; its full sequence is Large ribosomal subunit protein bL27 (85 aa).

The disordered stretch occupies residues 1–24 (MAHKKAGGSSRNGRDSHSKRLGVK).

Belongs to the bacterial ribosomal protein bL27 family.

This is Large ribosomal subunit protein bL27 from Nitrosomonas eutropha (strain DSM 101675 / C91 / Nm57).